The primary structure comprises 197 residues: Large ribosomal subunit protein uL22 (197 aa).

The segment at 118 to 197 is disordered; the sequence is ESRPAKDQRS…ETSAAKGGSD (80 aa). Residues 149–165 show a composition bias toward low complexity; it reads APAKKAAAKAPAKKAPA. Positions 172-183 are enriched in basic residues; that stretch reads TPAKKAPAKKAP. Low complexity predominate over residues 184–197; the sequence is AKASETSAAKGGSD.

This sequence belongs to the universal ribosomal protein uL22 family. In terms of assembly, part of the 50S ribosomal subunit.

Its function is as follows. This protein binds specifically to 23S rRNA; its binding is stimulated by other ribosomal proteins, e.g. L4, L17, and L20. It is important during the early stages of 50S assembly. It makes multiple contacts with different domains of the 23S rRNA in the assembled 50S subunit and ribosome. In terms of biological role, the globular domain of the protein is located near the polypeptide exit tunnel on the outside of the subunit, while an extended beta-hairpin is found that lines the wall of the exit tunnel in the center of the 70S ribosome. This chain is Large ribosomal subunit protein uL22, found in Mycobacterium bovis (strain ATCC BAA-935 / AF2122/97).